The following is a 469-amino-acid chain: Glutamate--tRNA ligase (469 aa).

Positions 9 to 19 match the 'HIGH' region motif; sequence PSPTGFLHVGG. Cysteine 98, cysteine 100, cysteine 125, and aspartate 127 together coordinate Zn(2+). Residues 236 to 240 carry the 'KMSKS' region motif; the sequence is KLSKR. Lysine 239 lines the ATP pocket.

This sequence belongs to the class-I aminoacyl-tRNA synthetase family. Glutamate--tRNA ligase type 1 subfamily. As to quaternary structure, monomer. Requires Zn(2+) as cofactor.

The protein localises to the cytoplasm. The catalysed reaction is tRNA(Glu) + L-glutamate + ATP = L-glutamyl-tRNA(Glu) + AMP + diphosphate. Its function is as follows. Catalyzes the attachment of glutamate to tRNA(Glu) in a two-step reaction: glutamate is first activated by ATP to form Glu-AMP and then transferred to the acceptor end of tRNA(Glu). The polypeptide is Glutamate--tRNA ligase (Shewanella sp. (strain ANA-3)).